A 384-amino-acid polypeptide reads, in one-letter code: Alpha-2B adrenergic receptor (384 aa).

A helical membrane pass occupies residues 1–25 (AIAAVITFLILFTIFGNALVILAVL). Topologically, residues 26-36 (TSRSLRAPQNL) are cytoplasmic. A helical transmembrane segment spans residues 37-62 (FLVSLAAADILVATLIIPFSLANELL). Over 63–72 (GYWYFRRTWC) the chain is Extracellular. Cys-72 and Cys-151 are oxidised to a cystine. The helical transmembrane segment at 73–95 (EVYLALDVLFCTSSIVHLCAISL) threads the bilayer. Residues 96-117 (DRYWAVSRALQYNSKRTPRRIK) lie on the Cytoplasmic side of the membrane. The helical transmembrane segment at 118 to 140 (CVILTVWLIAAAISLPPLIYKGD) threads the bilayer. Topologically, residues 141–156 (QGPQPRGRPQCKLNQE) are extracellular. The helical transmembrane segment at 157-180 (AWYILSSSIGSFFAPCLIMILVYL) threads the bilayer. The Cytoplasmic portion of the chain corresponds to 181-348 (RIYLIAKRSN…LTREKRFTFV (168 aa)). The segment at 192-289 (RGPRAKGAPR…PEEEEECGSP (98 aa)) is disordered. Residues 218–229 (LANSPTLASSLA) show a composition bias toward polar residues. A compositionally biased stretch (basic and acidic residues) spans 240–249 (PPGEKERETP). A helical transmembrane segment spans residues 349–372 (LAVVIGVFVLCWFPFFFSYSLGAI). Residues 373–381 (CPQHCKVPH) are Extracellular-facing. The chain crosses the membrane as a helical span at residues 382–384 (GLF).

Belongs to the G-protein coupled receptor 1 family. Adrenergic receptor subfamily. ADRA2B sub-subfamily. Interacts with RAB26. Interacts with PPP1R9B. Interacts with GGA1, GGA2 and GGA3.

The protein localises to the cell membrane. Its function is as follows. Alpha-2 adrenergic receptors mediate the catecholamine-induced inhibition of adenylate cyclase through the action of G proteins. This chain is Alpha-2B adrenergic receptor (ADRA2B), found in Elephas maximus (Indian elephant).